The sequence spans 484 residues: Putative cysteine ligase BshC (484 aa).

Residues 372 to 435 adopt a coiled-coil conformation; sequence RAFRDRVEGL…AARDEVLARH (64 aa).

Belongs to the BshC family.

The sequence is that of Putative cysteine ligase BshC from Thermus thermophilus (strain ATCC BAA-163 / DSM 7039 / HB27).